The following is a 405-amino-acid chain: Glucose-1-phosphate adenylyltransferase 1 (405 aa).

Alpha-D-glucose 1-phosphate contacts are provided by residues Tyr96, Gly161, 176-177 (EK), and Ser194.

Belongs to the bacterial/plant glucose-1-phosphate adenylyltransferase family. In terms of assembly, homotetramer.

The catalysed reaction is alpha-D-glucose 1-phosphate + ATP + H(+) = ADP-alpha-D-glucose + diphosphate. It functions in the pathway glycan biosynthesis; glycogen biosynthesis. Its function is as follows. Involved in the biosynthesis of ADP-glucose, a building block required for the elongation reactions to produce glycogen. Catalyzes the reaction between ATP and alpha-D-glucose 1-phosphate (G1P) to produce pyrophosphate and ADP-Glc. This Vibrio vulnificus (strain YJ016) protein is Glucose-1-phosphate adenylyltransferase 1.